The sequence spans 701 residues: Larval serum protein 2 (701 aa).

The first 21 residues, 1–21 (MKSFTVIALAAVALLATLGQA), serve as a signal peptide directing secretion. N-linked (GlcNAc...) asparagine glycosylation occurs at Asn204.

Belongs to the hemocyanin family. As to quaternary structure, homohexamer.

Its subcellular location is the secreted. The protein resides in the extracellular space. In terms of biological role, larval storage protein (LSP) which may serve as a store of amino acids for synthesis of adult proteins. The chain is Larval serum protein 2 (Lsp2) from Drosophila melanogaster (Fruit fly).